The chain runs to 258 residues: NH(3)-dependent NAD(+) synthetase (258 aa).

34–41 (GLSGGIDS) is an ATP binding site. Position 40 (Asp-40) interacts with Mg(2+). Arg-116 contributes to the deamido-NAD(+) binding site. Thr-136 is a binding site for ATP. Residue Glu-141 participates in Mg(2+) binding. Residues Lys-165 and Ser-187 each contribute to the ATP site.

It belongs to the NAD synthetase family. Homodimer.

The enzyme catalyses deamido-NAD(+) + NH4(+) + ATP = AMP + diphosphate + NAD(+) + H(+). It participates in cofactor biosynthesis; NAD(+) biosynthesis; NAD(+) from deamido-NAD(+) (ammonia route): step 1/1. Catalyzes the ATP-dependent amidation of deamido-NAD to form NAD. Uses ammonia as a nitrogen source. This is NH(3)-dependent NAD(+) synthetase from Fusobacterium nucleatum subsp. nucleatum (strain ATCC 25586 / DSM 15643 / BCRC 10681 / CIP 101130 / JCM 8532 / KCTC 2640 / LMG 13131 / VPI 4355).